The primary structure comprises 257 residues: Very long chain fatty acid elongase F (257 aa).

The next 7 helical transmembrane spans lie at 10-30 (IPVV…LLFV), 55-75 (IFQI…LFVL), 98-118 (LICT…IFFV), 135-155 (FAMA…GVAF), 158-178 (CLLN…SSIS), 191-211 (ITIA…ITLA), and 221-241 (LTYG…QFYY).

This sequence belongs to the ELO family. Highly expressed in females. Little or no expression detected in males.

Its subcellular location is the endoplasmic reticulum membrane. The enzyme catalyses a very-long-chain acyl-CoA + malonyl-CoA + H(+) = a very-long-chain 3-oxoacyl-CoA + CO2 + CoA. The protein operates within lipid metabolism; fatty acid biosynthesis. Functionally, condensing enzyme that elongates saturated and monounsaturated very long chain fatty acids, to yield products up to 30 carbons in length. May also elongate diunsaturated fatty acids. Important for courtship behavior where it probably has a role in female pheromone biosynthesis. The chain is Very long chain fatty acid elongase F from Drosophila melanogaster (Fruit fly).